The following is a 492-amino-acid chain: Ketol-acid reductoisomerase (NADP(+)) (492 aa).

The KARI N-terminal Rossmann domain maps to 14 to 208 (LDQLGKCRFM…GGHRAGVLQS (195 aa)). Residues 45-48 (CGAQ), arginine 68, arginine 76, serine 78, and 108-110 (DKQ) contribute to the NADP(+) site. The active site involves histidine 132. NADP(+) is bound at residue glycine 158. KARI C-terminal knotted domains are found at residues 209–344 (SFVA…NAPQ) and 345–485 (FDGK…MKDM). Residues aspartate 217, glutamate 221, glutamate 389, and glutamate 393 each contribute to the Mg(2+) site. Serine 414 provides a ligand contact to substrate.

Belongs to the ketol-acid reductoisomerase family. Requires Mg(2+) as cofactor.

The catalysed reaction is (2R)-2,3-dihydroxy-3-methylbutanoate + NADP(+) = (2S)-2-acetolactate + NADPH + H(+). It catalyses the reaction (2R,3R)-2,3-dihydroxy-3-methylpentanoate + NADP(+) = (S)-2-ethyl-2-hydroxy-3-oxobutanoate + NADPH + H(+). It functions in the pathway amino-acid biosynthesis; L-isoleucine biosynthesis; L-isoleucine from 2-oxobutanoate: step 2/4. Its pathway is amino-acid biosynthesis; L-valine biosynthesis; L-valine from pyruvate: step 2/4. In terms of biological role, involved in the biosynthesis of branched-chain amino acids (BCAA). Catalyzes an alkyl-migration followed by a ketol-acid reduction of (S)-2-acetolactate (S2AL) to yield (R)-2,3-dihydroxy-isovalerate. In the isomerase reaction, S2AL is rearranged via a Mg-dependent methyl migration to produce 3-hydroxy-3-methyl-2-ketobutyrate (HMKB). In the reductase reaction, this 2-ketoacid undergoes a metal-dependent reduction by NADPH to yield (R)-2,3-dihydroxy-isovalerate. The chain is Ketol-acid reductoisomerase (NADP(+)) from Pectobacterium atrosepticum (strain SCRI 1043 / ATCC BAA-672) (Erwinia carotovora subsp. atroseptica).